Here is a 508-residue protein sequence, read N- to C-terminus: GMP synthase [glutamine-hydrolyzing] (508 aa).

Residues 1-189 (MILVLDFGSQ…ALLVCDCEKT (189 aa)) form the Glutamine amidotransferase type-1 domain. Catalysis depends on C78, which acts as the Nucleophile. Active-site residues include H163 and E165. The GMPS ATP-PPase domain occupies 190-383 (WGMQHFAQRE…LGISQDFLMR (194 aa)). 217–223 (SGGVDST) lines the ATP pocket.

Homodimer.

The catalysed reaction is XMP + L-glutamine + ATP + H2O = GMP + L-glutamate + AMP + diphosphate + 2 H(+). The protein operates within purine metabolism; GMP biosynthesis; GMP from XMP (L-Gln route): step 1/1. Its function is as follows. Catalyzes the synthesis of GMP from XMP. The chain is GMP synthase [glutamine-hydrolyzing] from Helicobacter pylori (strain HPAG1).